Reading from the N-terminus, the 1105-residue chain is Carbamoyl phosphate synthase large chain (1105 aa).

The carboxyphosphate synthetic domain stretch occupies residues 1–402 (MPKRDDIEKV…ALGKAVRSLE (402 aa)). ATP contacts are provided by Arg129, Arg169, Gly175, Gly176, Lys208, Val210, Glu215, Gly241, Ile242, His243, Gln285, and Glu299. The ATP-grasp 1 domain occupies 133 to 328 (KTAMKNCGLE…IAKISALLAV (196 aa)). Positions 285, 299, and 301 each coordinate Mg(2+). Mn(2+) contacts are provided by Gln285, Glu299, and Asn301. Residues 403 to 542 (LDIAPKLDLR…STYNGMENET (140 aa)) are oligomerization domain. The segment at 543 to 945 (IPSKRRKIMV…AFAKAQLSAD (403 aa)) is carbamoyl phosphate synthetic domain. The ATP-grasp 2 domain maps to 667-858 (AKFLKQSGLS…VAKIAAKTII (192 aa)). 10 residues coordinate ATP: Arg703, Lys742, Leu744, Glu749, Gly774, Ile775, His776, Ser777, Gln817, and Glu829. Gln817, Glu829, and Asn831 together coordinate Mg(2+). The Mn(2+) site is built by Gln817, Glu829, and Asn831. The MGS-like domain occupies 940–1101 (AQLSADGIST…QDIFYAQQNT (162 aa)). The segment at 946–1105 (GISTKSLLVT…YAQQNTLLKK (160 aa)) is allosteric domain.

Belongs to the CarB family. As to quaternary structure, composed of two chains; the small (or glutamine) chain promotes the hydrolysis of glutamine to ammonia, which is used by the large (or ammonia) chain to synthesize carbamoyl phosphate. Tetramer of heterodimers (alpha,beta)4. Mg(2+) is required as a cofactor. Mn(2+) serves as cofactor.

It carries out the reaction hydrogencarbonate + L-glutamine + 2 ATP + H2O = carbamoyl phosphate + L-glutamate + 2 ADP + phosphate + 2 H(+). The enzyme catalyses hydrogencarbonate + NH4(+) + 2 ATP = carbamoyl phosphate + 2 ADP + phosphate + 2 H(+). Its pathway is amino-acid biosynthesis; L-arginine biosynthesis; carbamoyl phosphate from bicarbonate: step 1/1. It participates in pyrimidine metabolism; UMP biosynthesis via de novo pathway; (S)-dihydroorotate from bicarbonate: step 1/3. Its function is as follows. Large subunit of the glutamine-dependent carbamoyl phosphate synthetase (CPSase). CPSase catalyzes the formation of carbamoyl phosphate from the ammonia moiety of glutamine, carbonate, and phosphate donated by ATP, constituting the first step of 2 biosynthetic pathways, one leading to arginine and/or urea and the other to pyrimidine nucleotides. The large subunit (synthetase) binds the substrates ammonia (free or transferred from glutamine from the small subunit), hydrogencarbonate and ATP and carries out an ATP-coupled ligase reaction, activating hydrogencarbonate by forming carboxy phosphate which reacts with ammonia to form carbamoyl phosphate. The protein is Carbamoyl phosphate synthase large chain of Pseudothermotoga lettingae (strain ATCC BAA-301 / DSM 14385 / NBRC 107922 / TMO) (Thermotoga lettingae).